The chain runs to 224 residues: Ribonuclease T (224 aa).

The region spanning 20-194 is the Exonuclease domain; the sequence is VVIDVETAGF…YDTERTAELF (175 aa). Mg(2+)-binding residues include aspartate 23, glutamate 25, histidine 181, and aspartate 186. Histidine 181 functions as the Proton donor/acceptor in the catalytic mechanism.

It belongs to the RNase T family. In terms of assembly, homodimer. The cofactor is Mg(2+).

Trims short 3' overhangs of a variety of RNA species, leaving a one or two nucleotide 3' overhang. Responsible for the end-turnover of tRNA: specifically removes the terminal AMP residue from uncharged tRNA (tRNA-C-C-A). Also appears to be involved in tRNA biosynthesis. In Shewanella putrefaciens (strain CN-32 / ATCC BAA-453), this protein is Ribonuclease T.